The following is a 238-amino-acid chain: Cysteine-rich venom protein pseudechetoxin-like (238 aa).

Residues 1–19 (MIAFTVLLSLAAVLQQSSG) form the signal peptide. A propeptide spanning residues 20-28 (TVDFASESS) is cleaved from the precursor. An SCP domain is found at 38-164 (VDKHNDLRRS…STKYLYVCQY (127 aa)). Intrachain disulfides connect Cys75–Cys153, Cys92–Cys165, Cys148–Cys162, Cys184–Cys191, Cys187–Cys196, Cys200–Cys233, Cys209–Cys227, and Cys218–Cys231. A ShKT domain is found at 200–233 (CKHNNDFSNCKALAKKSKCQTEWIKSKCPATCFC).

It belongs to the CRISP family. In terms of tissue distribution, expressed by the venom gland.

The protein resides in the secreted. Its function is as follows. Blocks olfactory (CNGA2) and retinal (CNGA1) CNG channel currents. Does not affect neither depolarization- nor caffeine-induced contraction of smooth muscle. This chain is Cysteine-rich venom protein pseudechetoxin-like, found in Oxyuranus scutellatus scutellatus (Australian taipan).